A 119-amino-acid polypeptide reads, in one-letter code: Large ribosomal subunit protein bL19 (119 aa).

This sequence belongs to the bacterial ribosomal protein bL19 family.

Its function is as follows. This protein is located at the 30S-50S ribosomal subunit interface and may play a role in the structure and function of the aminoacyl-tRNA binding site. This Leuconostoc mesenteroides subsp. mesenteroides (strain ATCC 8293 / DSM 20343 / BCRC 11652 / CCM 1803 / JCM 6124 / NCDO 523 / NBRC 100496 / NCIMB 8023 / NCTC 12954 / NRRL B-1118 / 37Y) protein is Large ribosomal subunit protein bL19.